The sequence spans 227 residues: Urease subunit gamma/beta (227 aa).

Residues 1-101 are urease gamma; the sequence is MRLTPTERDR…LAVVTDPIGG (101 aa). The urease beta stretch occupies residues 102-227; the sequence is GLGDQAPGAL…ACGYLGVEQR (126 aa).

It in the N-terminal section; belongs to the urease gamma subunit family. In the C-terminal section; belongs to the urease beta subunit family. As to quaternary structure, heterohexamer of 3 UreC (alpha) and 3 UreAB (gamma/beta) subunits.

The protein resides in the cytoplasm. It carries out the reaction urea + 2 H2O + H(+) = hydrogencarbonate + 2 NH4(+). It participates in nitrogen metabolism; urea degradation; CO(2) and NH(3) from urea (urease route): step 1/1. The sequence is that of Urease subunit gamma/beta from Streptomyces avermitilis (strain ATCC 31267 / DSM 46492 / JCM 5070 / NBRC 14893 / NCIMB 12804 / NRRL 8165 / MA-4680).